The sequence spans 410 residues: Histidine--tRNA ligase (410 aa).

This sequence belongs to the class-II aminoacyl-tRNA synthetase family.

Its subcellular location is the cytoplasm. It carries out the reaction tRNA(His) + L-histidine + ATP = L-histidyl-tRNA(His) + AMP + diphosphate + H(+). The chain is Histidine--tRNA ligase from Methanoregula boonei (strain DSM 21154 / JCM 14090 / 6A8).